The sequence spans 278 residues: Pantothenate synthetase (278 aa).

Met-27–His-34 provides a ligand contact to ATP. Catalysis depends on His-34, which acts as the Proton donor. Gln-58 contacts (R)-pantoate. Gln-58 contributes to the beta-alanine binding site. Gly-144–Asp-147 provides a ligand contact to ATP. Gln-150 contacts (R)-pantoate. ATP is bound by residues Val-173 and Met-181–Arg-184.

Belongs to the pantothenate synthetase family. In terms of assembly, homodimer.

The protein resides in the cytoplasm. It carries out the reaction (R)-pantoate + beta-alanine + ATP = (R)-pantothenate + AMP + diphosphate + H(+). It participates in cofactor biosynthesis; (R)-pantothenate biosynthesis; (R)-pantothenate from (R)-pantoate and beta-alanine: step 1/1. Catalyzes the condensation of pantoate with beta-alanine in an ATP-dependent reaction via a pantoyl-adenylate intermediate. This chain is Pantothenate synthetase, found in Roseiflexus castenholzii (strain DSM 13941 / HLO8).